The chain runs to 87 residues: Small ribosomal subunit protein eS21 (87 aa).

It belongs to the eukaryotic ribosomal protein eS21 family. Component of the small ribosomal subunit. Mature ribosomes consist of a small (40S) and a large (60S) subunit. The 40S subunit contains about 33 different proteins and 1 molecule of RNA (18S). The 60S subunit contains about 49 different proteins and 3 molecules of RNA (25S, 5.8S and 5S).

The protein resides in the cytoplasm. Functionally, required for the processing of the 20S rRNA-precursor to mature 18S rRNA in a late step of the maturation of 40S ribosomal subunits. Has a physiological role leading to 18S rRNA stability. The chain is Small ribosomal subunit protein eS21 (RPS21) from Candida albicans (Yeast).